Reading from the N-terminus, the 199-residue chain is N-(5'-phosphoribosyl)anthranilate isomerase (199 aa).

This sequence belongs to the TrpF family.

It carries out the reaction N-(5-phospho-beta-D-ribosyl)anthranilate = 1-(2-carboxyphenylamino)-1-deoxy-D-ribulose 5-phosphate. Its pathway is amino-acid biosynthesis; L-tryptophan biosynthesis; L-tryptophan from chorismate: step 3/5. This chain is N-(5'-phosphoribosyl)anthranilate isomerase, found in Solibacter usitatus (strain Ellin6076).